A 333-amino-acid polypeptide reads, in one-letter code: Aspartate carbamoyltransferase catalytic subunit (333 aa).

Arg-61 and Thr-62 together coordinate carbamoyl phosphate. Lys-89 serves as a coordination point for L-aspartate. Residues Arg-111, His-144, and Gln-147 each contribute to the carbamoyl phosphate site. Arg-184 and Arg-248 together coordinate L-aspartate. The carbamoyl phosphate site is built by Gly-289 and Pro-290.

This sequence belongs to the aspartate/ornithine carbamoyltransferase superfamily. ATCase family. As to quaternary structure, heterododecamer (2C3:3R2) of six catalytic PyrB chains organized as two trimers (C3), and six regulatory PyrI chains organized as three dimers (R2).

It carries out the reaction carbamoyl phosphate + L-aspartate = N-carbamoyl-L-aspartate + phosphate + H(+). The protein operates within pyrimidine metabolism; UMP biosynthesis via de novo pathway; (S)-dihydroorotate from bicarbonate: step 2/3. Its function is as follows. Catalyzes the condensation of carbamoyl phosphate and aspartate to form carbamoyl aspartate and inorganic phosphate, the committed step in the de novo pyrimidine nucleotide biosynthesis pathway. The polypeptide is Aspartate carbamoyltransferase catalytic subunit (Trichormus variabilis (strain ATCC 29413 / PCC 7937) (Anabaena variabilis)).